The primary structure comprises 127 residues: UPF0102 protein ERGA_CDS_00540 (127 aa).

The protein belongs to the UPF0102 family.

This Ehrlichia ruminantium (strain Gardel) protein is UPF0102 protein ERGA_CDS_00540.